We begin with the raw amino-acid sequence, 235 residues long: MEKERINENTIRVMIDNSDLKDRGITVMELLGNHEKIESFFYNILSEVDTEHDFEDDDQVSFQILPNRNGLELFISRLDEENKISDILDNITNFSSKQPANIDNISDKRRQELRQSDKGDIVKSKVSSSDHKDGSQENFENTQVILALSDFENAIAIANSLKIENLVSDLYLYEGAYYLNLLVPDHSVSQEQLKNELAIALEFSRISHVTHEVLHEHGQLILKHEALEKIKSLFS.

Residues 113 to 135 (LRQSDKGDIVKSKVSSSDHKDGS) are compositionally biased toward basic and acidic residues. Residues 113–136 (LRQSDKGDIVKSKVSSSDHKDGSQ) form a disordered region.

Belongs to the MecA family. Homodimer.

Enables the recognition and targeting of unfolded and aggregated proteins to the ClpC protease or to other proteins involved in proteolysis. This is Adapter protein MecA from Leuconostoc mesenteroides subsp. mesenteroides (strain ATCC 8293 / DSM 20343 / BCRC 11652 / CCM 1803 / JCM 6124 / NCDO 523 / NBRC 100496 / NCIMB 8023 / NCTC 12954 / NRRL B-1118 / 37Y).